The primary structure comprises 148 residues: Oleosin 16 kDa (148 aa).

The tract at residues 1–21 (MADQHRGVIGGGGYGDRGGQE) is disordered. At Ala-2 the chain carries N-acetylalanine. The segment at 2–34 (ADQHRGVIGGGGYGDRGGQEQQEKQPFMMTALK) is polar. A compositionally biased stretch (gly residues) spans 8–17 (VIGGGGYGDR). The segment at 35-106 (TVTAATAGGS…AALSVFSWMY (72 aa)) is hydrophobic. 3 helical membrane-spanning segments follow: residues 43–63 (GSMLVLSGLILAGTVIALTVA), 66–86 (VLVIFSPVLVPAAIALALMAA), and 87–107 (GFVTSGGLGVAALSVFSWMYK).

It belongs to the oleosin family.

It localises to the lipid droplet. It is found in the membrane. Functionally, may have a structural role to stabilize the lipid body during desiccation of the seed by preventing coalescence of the oil. Probably interacts with both lipid and phospholipid moieties of lipid bodies. May also provide recognition signals for specific lipase anchorage in lipolysis during seedling growth. The chain is Oleosin 16 kDa (OLE16) from Oryza sativa subsp. japonica (Rice).